The following is a 60-amino-acid chain: UI (60 aa).

Over residues Ala1–Gly14 the composition is skewed to low complexity. Residues Ala1–Asp22 are disordered. Val60 is modified (valine amide).

The protein belongs to the sauvagine/corticotropin-releasing factor/urotensin I family.

The protein localises to the secreted. Its function is as follows. Urotensin is found in the teleost caudal neurosecretory system. It has a suggested role in osmoregulation and as a corticotropin-releasing factor. The non-hormonal portion of this precursor may be a urotensin binding protein, urophysin. This is UI from Platichthys flesus (European flounder).